The chain runs to 490 residues: Bifunctional protein HldE (490 aa).

The tract at residues 1–330 is ribokinase; that stretch reads MLDFEQLSPA…RKILPHAFLA (330 aa). Residue 205 to 208 coordinates ATP; that stretch reads NRKE. Residue Asp-275 is part of the active site. The cytidylyltransferase stretch occupies residues 358–490; it reads FTNGCFDILH…LVARAQNGKS (133 aa).

The protein in the N-terminal section; belongs to the carbohydrate kinase PfkB family. It in the C-terminal section; belongs to the cytidylyltransferase family. As to quaternary structure, homodimer.

It catalyses the reaction D-glycero-beta-D-manno-heptose 7-phosphate + ATP = D-glycero-beta-D-manno-heptose 1,7-bisphosphate + ADP + H(+). It carries out the reaction D-glycero-beta-D-manno-heptose 1-phosphate + ATP + H(+) = ADP-D-glycero-beta-D-manno-heptose + diphosphate. It participates in nucleotide-sugar biosynthesis; ADP-L-glycero-beta-D-manno-heptose biosynthesis; ADP-L-glycero-beta-D-manno-heptose from D-glycero-beta-D-manno-heptose 7-phosphate: step 1/4. The protein operates within nucleotide-sugar biosynthesis; ADP-L-glycero-beta-D-manno-heptose biosynthesis; ADP-L-glycero-beta-D-manno-heptose from D-glycero-beta-D-manno-heptose 7-phosphate: step 3/4. Its function is as follows. Catalyzes the phosphorylation of D-glycero-D-manno-heptose 7-phosphate at the C-1 position to selectively form D-glycero-beta-D-manno-heptose-1,7-bisphosphate. Catalyzes the ADP transfer from ATP to D-glycero-beta-D-manno-heptose 1-phosphate, yielding ADP-D-glycero-beta-D-manno-heptose. In Rhodopseudomonas palustris (strain BisA53), this protein is Bifunctional protein HldE.